Consider the following 253-residue polypeptide: FAS1 domain-containing protein CAGL0M08734g (253 aa).

The N-terminal stretch at 1–16 (MVALKYVLVPVALVAA) is a signal peptide. The FAS1 domain occupies 84–248 (DIYLDSQISV…GVILVIDATL (165 aa)).

It localises to the vacuole. The protein is FAS1 domain-containing protein CAGL0M08734g of Candida glabrata (strain ATCC 2001 / BCRC 20586 / JCM 3761 / NBRC 0622 / NRRL Y-65 / CBS 138) (Yeast).